The following is a 160-amino-acid chain: Small ribosomal subunit protein uS7 (160 aa).

Belongs to the universal ribosomal protein uS7 family. In terms of assembly, part of the 30S ribosomal subunit. Contacts proteins S9 and S11.

Its function is as follows. One of the primary rRNA binding proteins, it binds directly to 16S rRNA where it nucleates assembly of the head domain of the 30S subunit. Is located at the subunit interface close to the decoding center, probably blocks exit of the E-site tRNA. In Ehrlichia canis (strain Jake), this protein is Small ribosomal subunit protein uS7.